The chain runs to 124 residues: Small ribosomal subunit protein uS12 (124 aa).

The interval 1–30 (MPTIQQLVRKGRQDKVAKTKTAALKGSPQR) is disordered. At Asp89 the chain carries 3-methylthioaspartic acid. The interval 102–124 (ADTQGVKNRKQARSRYGAKKEKS) is disordered. Over residues 108 to 118 (KNRKQARSRYG) the composition is skewed to basic residues.

This sequence belongs to the universal ribosomal protein uS12 family. As to quaternary structure, part of the 30S ribosomal subunit. Contacts proteins S8 and S17. May interact with IF1 in the 30S initiation complex.

In terms of biological role, with S4 and S5 plays an important role in translational accuracy. Interacts with and stabilizes bases of the 16S rRNA that are involved in tRNA selection in the A site and with the mRNA backbone. Located at the interface of the 30S and 50S subunits, it traverses the body of the 30S subunit contacting proteins on the other side and probably holding the rRNA structure together. The combined cluster of proteins S8, S12 and S17 appears to hold together the shoulder and platform of the 30S subunit. This Saccharopolyspora erythraea (strain ATCC 11635 / DSM 40517 / JCM 4748 / NBRC 13426 / NCIMB 8594 / NRRL 2338) protein is Small ribosomal subunit protein uS12.